The chain runs to 149 residues: Vesicle-associated protein 3-1 (149 aa).

Residue methionine 1 is modified to N-acetylmethionine. Serine 2 is subject to N-acetylserine; in Vesicle-associated protein 3-1, N-terminally processed. An MSP domain is found at 6 to 126; the sequence is LLEIEPMYLQ…EETKLRVTYV (121 aa).

This sequence belongs to the VAMP-associated protein (VAP) (TC 9.B.17) family.

In terms of biological role, may play a role in vesicle trafficking. This is Vesicle-associated protein 3-1 (PVA31) from Arabidopsis thaliana (Mouse-ear cress).